Reading from the N-terminus, the 227-residue chain is PKHD-type hydroxylase ABSDF3031 (227 aa).

The 101-residue stretch at 78-178 folds into the Fe2OG dioxygenase domain; the sequence is KIIPPLFNRY…RFASFFWVQS (101 aa). 3 residues coordinate Fe cation: histidine 96, aspartate 98, and histidine 159. Arginine 169 is a binding site for 2-oxoglutarate.

Fe(2+) is required as a cofactor. The cofactor is L-ascorbate.

The polypeptide is PKHD-type hydroxylase ABSDF3031 (Acinetobacter baumannii (strain SDF)).